Consider the following 475-residue polypeptide: UDP-N-acetylmuramate--L-alanine ligase (475 aa).

119–125 contributes to the ATP binding site; that stretch reads GTHGKTT.

It belongs to the MurCDEF family.

Its subcellular location is the cytoplasm. The catalysed reaction is UDP-N-acetyl-alpha-D-muramate + L-alanine + ATP = UDP-N-acetyl-alpha-D-muramoyl-L-alanine + ADP + phosphate + H(+). It functions in the pathway cell wall biogenesis; peptidoglycan biosynthesis. Its function is as follows. Cell wall formation. The chain is UDP-N-acetylmuramate--L-alanine ligase from Wigglesworthia glossinidia brevipalpis.